The sequence spans 241 residues: Aspartate/glutamate leucyltransferase (241 aa).

Belongs to the R-transferase family. Bpt subfamily.

The protein localises to the cytoplasm. It catalyses the reaction N-terminal L-glutamyl-[protein] + L-leucyl-tRNA(Leu) = N-terminal L-leucyl-L-glutamyl-[protein] + tRNA(Leu) + H(+). The catalysed reaction is N-terminal L-aspartyl-[protein] + L-leucyl-tRNA(Leu) = N-terminal L-leucyl-L-aspartyl-[protein] + tRNA(Leu) + H(+). Its function is as follows. Functions in the N-end rule pathway of protein degradation where it conjugates Leu from its aminoacyl-tRNA to the N-termini of proteins containing an N-terminal aspartate or glutamate. The chain is Aspartate/glutamate leucyltransferase from Parvibaculum lavamentivorans (strain DS-1 / DSM 13023 / NCIMB 13966).